A 327-amino-acid polypeptide reads, in one-letter code: Zinc transport protein ZntB (327 aa).

At 1-273 (MEAIKGSDVN…ARRTYTMSLM (273 aa)) the chain is on the cytoplasmic side. Residues 274–294 (AMVFLPSTFLTGLFGVNLGGI) form a helical membrane-spanning segment. Residues 295-300 (PGGGWQ) lie on the Periplasmic side of the membrane. Residues 301 to 321 (FGFSIFCILLVVLIGGVALWL) traverse the membrane as a helical segment. The Cytoplasmic portion of the chain corresponds to 322–327 (HRSKWL).

The protein belongs to the CorA metal ion transporter (MIT) (TC 1.A.35) family.

The protein localises to the cell inner membrane. The catalysed reaction is Zn(2+)(out) + H(+)(out) = Zn(2+)(in) + H(+)(in). Functionally, zinc transporter. Acts as a Zn(2+):proton symporter, which likely mediates zinc ion uptake. This is Zinc transport protein ZntB from Escherichia coli O8 (strain IAI1).